We begin with the raw amino-acid sequence, 92 residues long: Large ribosomal subunit protein uL24 (92 aa).

Belongs to the universal ribosomal protein uL24 family. As to quaternary structure, part of the 50S ribosomal subunit.

In terms of biological role, one of two assembly initiator proteins, it binds directly to the 5'-end of the 23S rRNA, where it nucleates assembly of the 50S subunit. One of the proteins that surrounds the polypeptide exit tunnel on the outside of the subunit. The protein is Large ribosomal subunit protein uL24 of Opitutus terrae (strain DSM 11246 / JCM 15787 / PB90-1).